A 450-amino-acid polypeptide reads, in one-letter code: Zinc finger protein 277 (450 aa).

A2 is modified (N-acetylalanine). 2 C2H2-type zinc fingers span residues 224-248 and 355-381; these read LQCL…KKQH and HQCR…ETKH.

It belongs to the ZNF277 family. In terms of assembly, interacts (via zinc-finger domains) with RPS2/40S ribosomal protein S2, perhaps as nascent RPS2 is synthesized during translation; the interaction is direct; the interaction is extra-ribosomal. Interaction with RPS2 competes with the binding of RPS2 to protein arginine methyltransferase PRMT3. Interacts with Polycomb group (PcG) complex protein BMI1. May be part of a complex including at least ZNF277, BMI1 and RNF2/RING2.

It localises to the nucleus. Functionally, probable transcription factor. Involved in modulation of cellular senescence; represses transcription of the tumor suppressor gene INK4A/ARF, perhaps acting via the Polycomb group (PcG) complex PRC1. The chain is Zinc finger protein 277 (ZNF277) from Homo sapiens (Human).